The sequence spans 359 residues: DNA replication and repair protein RecF (359 aa).

Gly30–Thr37 contributes to the ATP binding site.

This sequence belongs to the RecF family.

It localises to the cytoplasm. Functionally, the RecF protein is involved in DNA metabolism; it is required for DNA replication and normal SOS inducibility. RecF binds preferentially to single-stranded, linear DNA. It also seems to bind ATP. The sequence is that of DNA replication and repair protein RecF from Flavobacterium johnsoniae (strain ATCC 17061 / DSM 2064 / JCM 8514 / BCRC 14874 / CCUG 350202 / NBRC 14942 / NCIMB 11054 / UW101) (Cytophaga johnsonae).